Consider the following 236-residue polypeptide: 2,3,4,5-tetrahydropyridine-2,6-dicarboxylate N-acetyltransferase (236 aa).

This sequence belongs to the transferase hexapeptide repeat family. DapH subfamily.

It catalyses the reaction (S)-2,3,4,5-tetrahydrodipicolinate + acetyl-CoA + H2O = L-2-acetamido-6-oxoheptanedioate + CoA. The protein operates within amino-acid biosynthesis; L-lysine biosynthesis via DAP pathway; LL-2,6-diaminopimelate from (S)-tetrahydrodipicolinate (acetylase route): step 1/3. Functionally, catalyzes the transfer of an acetyl group from acetyl-CoA to tetrahydrodipicolinate. This Clostridium botulinum (strain Alaska E43 / Type E3) protein is 2,3,4,5-tetrahydropyridine-2,6-dicarboxylate N-acetyltransferase.